The primary structure comprises 295 residues: Taste receptor type 2 member 120 (295 aa).

Topologically, residues Met-1–Glu-5 are extracellular. The chain crosses the membrane as a helical span at residues Trp-6–Ile-26. Topologically, residues Thr-27–Arg-45 are cytoplasmic. The chain crosses the membrane as a helical span at residues Ile-46–His-66. The Extracellular portion of the chain corresponds to Ser-67–Arg-80. A helical membrane pass occupies residues Val-81 to Leu-101. Over Ser-102–Val-127 the chain is Cytoplasmic. Residues Leu-128–Ile-148 form a helical membrane-spanning segment. At Lys-149–Leu-177 the chain is on the extracellular side. An N-linked (GlcNAc...) asparagine glycan is attached at Asn-160. Residues Leu-178–Ile-198 form a helical membrane-spanning segment. Residues Tyr-199–Gln-228 are Cytoplasmic-facing. Residues Thr-229–Trp-249 traverse the membrane as a helical segment. The Extracellular portion of the chain corresponds to Ser-250–Pro-255. A helical transmembrane segment spans residues Val-256 to Ile-276. The Cytoplasmic segment spans residues Trp-277–Cys-295.

The protein belongs to the G-protein coupled receptor T2R family.

Its subcellular location is the membrane. Functionally, putative taste receptor which may play a role in the perception of bitterness. This chain is Taste receptor type 2 member 120, found in Mus musculus (Mouse).